The following is a 130-amino-acid chain: MAKRKVTRKKIVRKNIADGIVHIAASFNNTMVTVTDNAGNAIAWSSAGNLGFKGSKKSTPFAAQAAVEDAMNKAMEHGIKNVGIKIQGPGSGRDTAVKAVGSMDGVRVTWLKDVTPLAHNGCRPPKRRRV.

The protein belongs to the universal ribosomal protein uS11 family. In terms of assembly, part of the 30S ribosomal subunit. Interacts with proteins S7 and S18. Binds to IF-3.

Its function is as follows. Located on the platform of the 30S subunit, it bridges several disparate RNA helices of the 16S rRNA. Forms part of the Shine-Dalgarno cleft in the 70S ribosome. The polypeptide is Small ribosomal subunit protein uS11 (Aliarcobacter butzleri (strain RM4018) (Arcobacter butzleri)).